Consider the following 361-residue polypeptide: Anhydro-N-acetylmuramic acid kinase (361 aa).

10-17 (GTSLDGVD) lines the ATP pocket.

Belongs to the anhydro-N-acetylmuramic acid kinase family.

The enzyme catalyses 1,6-anhydro-N-acetyl-beta-muramate + ATP + H2O = N-acetyl-D-muramate 6-phosphate + ADP + H(+). It participates in amino-sugar metabolism; 1,6-anhydro-N-acetylmuramate degradation. Its pathway is cell wall biogenesis; peptidoglycan recycling. Functionally, catalyzes the specific phosphorylation of 1,6-anhydro-N-acetylmuramic acid (anhMurNAc) with the simultaneous cleavage of the 1,6-anhydro ring, generating MurNAc-6-P. Is required for the utilization of anhMurNAc either imported from the medium or derived from its own cell wall murein, and thus plays a role in cell wall recycling. This is Anhydro-N-acetylmuramic acid kinase from Gluconobacter oxydans (strain 621H) (Gluconobacter suboxydans).